The primary structure comprises 222 residues: Putative adhesin RP828 (222 aa).

The N-terminal stretch at 1–22 (MKKLLLIATASATILSSSVSFA) is a signal peptide.

In terms of biological role, adheres to biotinylated epithelial (Vero cell) proteins. In Rickettsia prowazekii (strain Madrid E), this protein is Putative adhesin RP828.